An 86-amino-acid chain; its full sequence is U15-lycotoxin-Ls1d (86 aa).

An N-terminal signal peptide occupies residues 1–20; the sequence is MNSKIFAVLLLLALLSCVLS. Positions 21-66 constitute a WAP domain; that stretch reads DQYCPKSSITACKKMNIRNDCCKDDDCTGGSWCCATPCGNFCKYPT. 5 cysteine pairs are disulfide-bonded: Cys-24/Cys-54, Cys-32/Cys-58, Cys-41/Cys-53, Cys-42/Cys-80, and Cys-47/Cys-62.

Belongs to the venom protein 11 family. 01 (wap-1) subfamily. Post-translationally, contains 5 disulfide bonds. Expressed by the venom gland.

The protein localises to the secreted. Its function is as follows. Has antibacterial activity. In Lycosa singoriensis (Wolf spider), this protein is U15-lycotoxin-Ls1d.